A 341-amino-acid chain; its full sequence is Hyaluronan and proteoglycan link protein 2 (341 aa).

Positions 1-27 are cleaved as a signal peptide; it reads MPSRIPLPAFCCFLLPWAFTSFHKALG. In terms of domain architecture, Ig-like V-type spans 35–143; the sequence is PHYLLPPIHE…GIEDESVALT (109 aa). Intrachain disulfides connect Cys58–Cys129, Cys171–Cys241, Cys195–Cys216, Cys266–Cys337, and Cys291–Cys312. 2 consecutive Link domains span residues 149-243 and 246-339; these read VVFP…FCFT and LAGQ…YCYA.

The protein belongs to the HAPLN family. In terms of tissue distribution, brain. Predominantly expressed by neurons. Colocalizes with versican V2 in developing and adult cerebellar white matter and at the nodes of Ranvier.

The protein resides in the secreted. Its subcellular location is the extracellular space. The protein localises to the extracellular matrix. Its function is as follows. Mediates a firm binding of versican V2 to hyaluronic acid. May play a pivotal role in the formation of the hyaluronan-associated matrix in the central nervous system (CNS) which facilitates neuronal conduction and general structural stabilization. Binds to hyaluronic acid. This chain is Hyaluronan and proteoglycan link protein 2 (Hapln2), found in Mus musculus (Mouse).